Here is a 62-residue protein sequence, read N- to C-terminus: Alpha-conotoxin-like S1.1 (62 aa).

The signal sequence occupies residues 1–21 (MGMRMMFTVFLLVVLAITVVS). The propeptide occupies 22 to 48 (FPLDRESDGANAEARTHDHEKHALDRN). Cystine bridges form between cysteine 50–cysteine 56 and cysteine 51–cysteine 61. Cysteine amide is present on cysteine 61.

It belongs to the conotoxin A superfamily. As to expression, expressed by the venom duct.

Its subcellular location is the secreted. Functionally, alpha-conotoxins act on postsynaptic membranes, they bind to the nicotinic acetylcholine receptors (nAChR) and thus inhibit them. The polypeptide is Alpha-conotoxin-like S1.1 (Conus striatus (Striated cone)).